An 86-amino-acid chain; its full sequence is Small ribosomal subunit protein uS17 (86 aa).

The protein belongs to the universal ribosomal protein uS17 family. Part of the 30S ribosomal subunit.

Its function is as follows. One of the primary rRNA binding proteins, it binds specifically to the 5'-end of 16S ribosomal RNA. The chain is Small ribosomal subunit protein uS17 from Helicobacter acinonychis (strain Sheeba).